Here is a 107-residue protein sequence, read N- to C-terminus: Universal stress protein B homolog (107 aa).

2 helical membrane-spanning segments follow: residues 6 to 23 (TILF…ARYF) and 89 to 106 (LFIL…SSFI).

It belongs to the universal stress protein B family.

The protein localises to the cell inner membrane. The sequence is that of Universal stress protein B homolog from Vibrio atlanticus (strain LGP32) (Vibrio splendidus (strain Mel32)).